A 190-amino-acid polypeptide reads, in one-letter code: FUN14 domain-containing protein 2 (190 aa).

Residues 1 to 13 (METSTQRTGSHLA) show a composition bias toward polar residues. The interval 1 to 31 (METSTQRTGSHLAQTAAARHSASSRGEAARV) is disordered. At 1 to 81 (METSTQRTGS…GQESGPSAEK (81 aa)) the chain is on the cytoplasmic side. Phosphoserine occurs at positions 10 and 54. Residues 82-102 (YSVATQLLIGGVTGWCTGFIF) form a helical membrane-spanning segment. At 103–108 (QKVGKL) the chain is on the mitochondrial intermembrane side. A helical membrane pass occupies residues 109–129 (AATAVGGGFFLLQLANHTGYI). At 130-165 (KVDWQRVEKDMKKAKEQLKIRKSNQIPTEVKSKAEE) the chain is on the cytoplasmic side. Ser152 is modified (phosphoserine). A helical transmembrane segment spans residues 166–186 (VVSFVKKNVLVTGGFFGGFLL). The Mitochondrial intermembrane portion of the chain corresponds to 187–190 (GMAS).

Belongs to the FUN14 family.

It localises to the mitochondrion outer membrane. The protein resides in the nucleus. In terms of biological role, binds directly and specifically 1,2-Diacyl-sn-glycero-3-phospho-(1'-myo-inositol-3',4',5'-bisphosphate) (PIP3) leading to the recruitment of PIP3 to mitochondria and may play a role in the regulation of the platelet activation via AKT/GSK3B/cGMP signaling pathways. May act as transcription factor that regulates SREBP1 (isoform SREBP-1C) expression in order to modulate triglyceride (TG) homeostasis in hepatocytes. In Bos taurus (Bovine), this protein is FUN14 domain-containing protein 2.